Reading from the N-terminus, the 174-residue chain is NADH-quinone oxidoreductase subunit C (174 aa).

The protein belongs to the complex I 30 kDa subunit family. In terms of assembly, NDH-1 is composed of 14 different subunits. Subunits NuoB, C, D, E, F, and G constitute the peripheral sector of the complex.

The protein resides in the cell membrane. The enzyme catalyses a quinone + NADH + 5 H(+)(in) = a quinol + NAD(+) + 4 H(+)(out). Functionally, NDH-1 shuttles electrons from NADH, via FMN and iron-sulfur (Fe-S) centers, to quinones in the respiratory chain. The immediate electron acceptor for the enzyme in this species is believed to be ubiquinone. Couples the redox reaction to proton translocation (for every two electrons transferred, four hydrogen ions are translocated across the cytoplasmic membrane), and thus conserves the redox energy in a proton gradient. This is NADH-quinone oxidoreductase subunit C from Roseiflexus sp. (strain RS-1).